The sequence spans 187 residues: Signal peptidase complex catalytic subunit SEC11 (187 aa).

The Cytoplasmic segment spans residues 1–14 (MLSSLSPYMANPRN). A helical; Signal-anchor for type II membrane protein transmembrane segment spans residues 15–33 (TLSQVLNFGLVLSSAFMVW). Residues 34–187 (KTLSVITNST…MGLMVMLQRE (154 aa)) lie on the Lumenal side of the membrane. Residue asparagine 41 is glycosylated (N-linked (GlcNAc...) asparagine). Active-site charge relay system residues include serine 53 and histidine 92. N-linked (GlcNAc...) asparagine glycosylation occurs at asparagine 125. Aspartate 129 functions as the Charge relay system in the catalytic mechanism. The interval 173–184 (VLLGFMGLMVML) is C-terminal short (CTS) helix.

This sequence belongs to the peptidase S26B family. Component of the signal peptidase complex (SPC) composed of a catalytic subunit SEC11 and three accessory subunits SPC1, SPC2 and SPC3. The complex induces a local thinning of the ER membrane which is used to measure the length of the signal peptide (SP) h-region of protein substrates. This ensures the selectivity of the complex towards h-regions shorter than 18-20 amino acids. SPC associates with the translocon complex.

Its subcellular location is the endoplasmic reticulum membrane. The catalysed reaction is Cleavage of hydrophobic, N-terminal signal or leader sequences from secreted and periplasmic proteins.. In terms of biological role, catalytic component of the signal peptidase complex (SPC) which catalyzes the cleavage of N-terminal signal sequences from nascent proteins as they are translocated into the lumen of the endoplasmic reticulum. Specifically cleaves N-terminal signal peptides that contain a hydrophobic alpha-helix (h-region) shorter than 18-20 amino acids. The polypeptide is Signal peptidase complex catalytic subunit SEC11 (SEC11) (Ajellomyces capsulatus (strain H88) (Darling's disease fungus)).